Consider the following 480-residue polypeptide: Coronin-2B (480 aa).

WD repeat units follow at residues 85–125 (GHQG…LKRN), 135–177 (GHSR…KMID), 179–217 (HTDVILCMSFNTDGSLLTTTCKDKKLRVIEPRSGRVLQE), 220–263 (CKNH…MPMI), and 265–308 (EEID…PYLS). Residues 436 to 479 (NELLRMFFRQQDEIRRLKEELAQKDIRLRQLQLELKNLRNNPKN) are a coiled coil.

Belongs to the WD repeat coronin family. In terms of assembly, binds to F-actin and to vinculin.

The protein resides in the cytoplasm. The protein localises to the cytoskeleton. Functionally, may play a role in the reorganization of neuronal actin structure. This is Coronin-2B (Coro2b) from Mus musculus (Mouse).